The sequence spans 377 residues: Interferon gamma receptor 1 (377 aa).

The first 23 residues, 1 to 23 (MRTQIYISVTVLILLLKKSDLEA), serve as a signal peptide directing secretion. Topologically, residues 24–235 (VRVPSPESVS…IRRYTPFTVY (212 aa)) are extracellular. Residues 26-117 (VPSPESVSVQ…DFFIFSFNEN (92 aa)) enclose the Fibronectin type-III domain. N-linked (GlcNAc...) asparagine glycosylation is found at Asn78 and Asn186. The helical transmembrane segment at 236–256 (LYPVLGVTLTLLFITGIIILL) threads the bilayer. Over 257-377 (EKKCNSEMKK…TVDSYGPRLL (121 aa)) the chain is Cytoplasmic. Residues 326-377 (VYSEDKNSYGPNDLVEDEQSDLSDFYDCPHAPKQKREMSPGDTVDSYGPRLL) form a disordered region.

The protein belongs to the type II cytokine receptor family. As to expression, highly expressed in spleen. Also detected in brain, kidney, gill, intestine and heart. Expressed at very low levels in muscle. In immune cell populations, shows highest expression in monocytes, and slightly lower expression in peripheral blood leukocytes, splenocytes, neutrophils and mature macrophages.

It is found in the cell membrane. Its function is as follows. Receptor which shows binding specificity for the cytokine ifng1r (interferon gamma-related). The chain is Interferon gamma receptor 1 from Carassius auratus (Goldfish).